The chain runs to 313 residues: Porphobilinogen deaminase (313 aa).

The residue at position 242 (cysteine 242) is an S-(dipyrrolylmethanemethyl)cysteine.

It belongs to the HMBS family. Monomer. Requires dipyrromethane as cofactor.

It carries out the reaction 4 porphobilinogen + H2O = hydroxymethylbilane + 4 NH4(+). It participates in porphyrin-containing compound metabolism; protoporphyrin-IX biosynthesis; coproporphyrinogen-III from 5-aminolevulinate: step 2/4. Tetrapolymerization of the monopyrrole PBG into the hydroxymethylbilane pre-uroporphyrinogen in several discrete steps. This is Porphobilinogen deaminase from Escherichia coli O6:H1 (strain CFT073 / ATCC 700928 / UPEC).